A 238-amino-acid chain; its full sequence is MNDVITAEFDENGRAIRRIRSFVRRQGRLTKGQQLALDEYWPLMGVEFTPEALDLPTLFGREAPVVLEIGFGMGASLVAMAQQHPERDFLGIEVHSPGVGACLSSAHEAGVNNLRVMCHDAVEVLERMIPDASLDMVQLFFPDPWHKARHHKRRIVQSAFAGRIRGKLKISGVFHMATDWENYAEHMLEVMNHAPGYRNLSDDNTYVPRPDSRPVTKFELRGQRLGHGNWDLMFERVE.

S-adenosyl-L-methionine is bound by residues glutamate 68, glutamate 93, aspartate 120, and aspartate 143. Residue aspartate 143 is part of the active site. Substrate contacts are provided by residues lysine 147, aspartate 179, and 216–219 (TKFE).

It belongs to the class I-like SAM-binding methyltransferase superfamily. TrmB family. Monomer.

The catalysed reaction is guanosine(46) in tRNA + S-adenosyl-L-methionine = N(7)-methylguanosine(46) in tRNA + S-adenosyl-L-homocysteine. It functions in the pathway tRNA modification; N(7)-methylguanine-tRNA biosynthesis. Its function is as follows. Catalyzes the formation of N(7)-methylguanine at position 46 (m7G46) in tRNA. This Edwardsiella ictaluri (strain 93-146) protein is tRNA (guanine-N(7)-)-methyltransferase.